The chain runs to 427 residues: Phosphatidylserine decarboxylase proenzyme 1, mitochondrial (427 aa).

The transit peptide at 1–77 (MRSYLRFSDR…RRFVYKLDQA (77 aa)) directs the protein to the mitochondrion. At 78 to 88 (VTAALGPNGRY) the chain is on the mitochondrial matrix side. Residues 89 to 107 (IAMVGMTASAVLLTFHYKF) traverse the membrane as a helical segment. Residues 108–427 (REVIAATDNV…TEDERLFAFY (320 aa)) are Mitochondrial intermembrane-facing. Catalysis depends on charge relay system; for autoendoproteolytic cleavage activity residues Asp210, His268, and Ser379. Ser379 acts as the Schiff-base intermediate with substrate; via pyruvic acid; for decarboxylase activity in catalysis. Pyruvic acid (Ser); by autocatalysis is present on Ser379.

Belongs to the phosphatidylserine decarboxylase family. PSD-B subfamily. Eukaryotic type I sub-subfamily. As to quaternary structure, heterodimer of a large membrane-associated beta subunit and a small pyruvoyl-containing alpha subunit. The cofactor is pyruvate. In terms of processing, is synthesized initially as an inactive proenzyme. Formation of the active enzyme involves a self-maturation process in which the active site pyruvoyl group is generated from an internal serine residue via an autocatalytic post-translational modification. Two non-identical subunits are generated from the proenzyme in this reaction, and the pyruvate is formed at the N-terminus of the alpha chain, which is derived from the carboxyl end of the proenzyme. The autoendoproteolytic cleavage occurs by a canonical serine protease mechanism, in which the side chain hydroxyl group of the serine supplies its oxygen atom to form the C-terminus of the beta chain, while the remainder of the serine residue undergoes an oxidative deamination to produce ammonia and the pyruvoyl prosthetic group on the alpha chain. During this reaction, the Ser that is part of the protease active site of the proenzyme becomes the pyruvoyl prosthetic group, which constitutes an essential element of the active site of the mature decarboxylase.

The protein resides in the mitochondrion. It is found in the mitochondrion inner membrane. It carries out the reaction a 1,2-diacyl-sn-glycero-3-phospho-L-serine + H(+) = a 1,2-diacyl-sn-glycero-3-phosphoethanolamine + CO2. The protein operates within phospholipid metabolism; phosphatidylethanolamine biosynthesis; phosphatidylethanolamine from CDP-diacylglycerol: step 2/2. Functionally, catalyzes the formation of phosphatidylethanolamine (PtdEtn) from phosphatidylserine (PtdSer). Plays a central role in phospholipid metabolism and in the interorganelle trafficking of phosphatidylserine. This is Phosphatidylserine decarboxylase proenzyme 1, mitochondrial from Toxoplasma gondii (strain ATCC 50853 / GT1).